The sequence spans 199 residues: dITP/XTP pyrophosphatase (199 aa).

Position 8–13 (8–13) interacts with substrate; it reads SGNAGK. The active-site Proton acceptor is the aspartate 69. A Mg(2+)-binding site is contributed by aspartate 69. Residues serine 70, 154–157, lysine 177, and 182–183 each bind substrate; these read FGYN and HR.

The protein belongs to the HAM1 NTPase family. In terms of assembly, homodimer. Mg(2+) is required as a cofactor.

It catalyses the reaction XTP + H2O = XMP + diphosphate + H(+). The catalysed reaction is dITP + H2O = dIMP + diphosphate + H(+). It carries out the reaction ITP + H2O = IMP + diphosphate + H(+). Its function is as follows. Pyrophosphatase that catalyzes the hydrolysis of nucleoside triphosphates to their monophosphate derivatives, with a high preference for the non-canonical purine nucleotides XTP (xanthosine triphosphate), dITP (deoxyinosine triphosphate) and ITP. Seems to function as a house-cleaning enzyme that removes non-canonical purine nucleotides from the nucleotide pool, thus preventing their incorporation into DNA/RNA and avoiding chromosomal lesions. This chain is dITP/XTP pyrophosphatase, found in Xylella fastidiosa (strain 9a5c).